Here is a 1302-residue protein sequence, read N- to C-terminus: Phosphoribosylformylglycinamidine synthase (1302 aa).

ATP is bound by residues 307–318 and A678; that span reads GASTGSGGEIRD. Mg(2+) is bound by residues E718, N722, and D891. Residues 1049–1302 form the Glutamine amidotransferase type-1 domain; that stretch reads MAILREQGVN…MFQNARKNIG (254 aa). The Nucleophile role is filled by C1142. Residues H1267 and E1269 contribute to the active site.

It in the N-terminal section; belongs to the FGAMS family. Monomer.

The protein localises to the cytoplasm. It catalyses the reaction N(2)-formyl-N(1)-(5-phospho-beta-D-ribosyl)glycinamide + L-glutamine + ATP + H2O = 2-formamido-N(1)-(5-O-phospho-beta-D-ribosyl)acetamidine + L-glutamate + ADP + phosphate + H(+). Its pathway is purine metabolism; IMP biosynthesis via de novo pathway; 5-amino-1-(5-phospho-D-ribosyl)imidazole from N(2)-formyl-N(1)-(5-phospho-D-ribosyl)glycinamide: step 1/2. Its function is as follows. Phosphoribosylformylglycinamidine synthase involved in the purines biosynthetic pathway. Catalyzes the ATP-dependent conversion of formylglycinamide ribonucleotide (FGAR) and glutamine to yield formylglycinamidine ribonucleotide (FGAM) and glutamate. This Vibrio parahaemolyticus serotype O3:K6 (strain RIMD 2210633) protein is Phosphoribosylformylglycinamidine synthase.